The sequence spans 421 residues: UDP-N-acetylglucosamine 1-carboxyvinyltransferase 1 (421 aa).

22–23 (KN) serves as a coordination point for phosphoenolpyruvate. Arg94 contacts UDP-N-acetyl-alpha-D-glucosamine. Cys118 functions as the Proton donor in the catalytic mechanism. A 2-(S-cysteinyl)pyruvic acid O-phosphothioketal modification is found at Cys118. UDP-N-acetyl-alpha-D-glucosamine is bound by residues 123-127 (RPIEL), Asp310, and Val332.

This sequence belongs to the EPSP synthase family. MurA subfamily.

It is found in the cytoplasm. The enzyme catalyses phosphoenolpyruvate + UDP-N-acetyl-alpha-D-glucosamine = UDP-N-acetyl-3-O-(1-carboxyvinyl)-alpha-D-glucosamine + phosphate. Its pathway is cell wall biogenesis; peptidoglycan biosynthesis. In terms of biological role, cell wall formation. Adds enolpyruvyl to UDP-N-acetylglucosamine. The protein is UDP-N-acetylglucosamine 1-carboxyvinyltransferase 1 of Clostridium perfringens (strain 13 / Type A).